Consider the following 505-residue polypeptide: DDB1- and CUL4-associated factor 17 (505 aa).

2 helical membrane passes run 186–206 and 222–242; these read VLLY…ILEI and GILI…QAII.

Interacts with DDB1, CUL4A and CUL4B.

The protein localises to the membrane. It localises to the nucleus. It is found in the nucleolus. It participates in protein modification; protein ubiquitination. May function as a substrate receptor for CUL4-DDB1 E3 ubiquitin-protein ligase complex. The sequence is that of DDB1- and CUL4-associated factor 17 (Dcaf17) from Rattus norvegicus (Rat).